The chain runs to 616 residues: Chaperone protein HscA (616 aa).

This sequence belongs to the heat shock protein 70 family.

Its function is as follows. Chaperone involved in the maturation of iron-sulfur cluster-containing proteins. Has a low intrinsic ATPase activity which is markedly stimulated by HscB. Involved in the maturation of IscU. The protein is Chaperone protein HscA of Salmonella paratyphi B (strain ATCC BAA-1250 / SPB7).